Reading from the N-terminus, the 314-residue chain is Probable phytol kinase 1, chloroplastic (314 aa).

Residues 1 to 62 constitute a chloroplast transit peptide; the sequence is MAAAARPVDV…GVGAAAAPAV (62 aa). 7 helical membrane-spanning segments follow: residues 72–91, 111–131, 135–155, 181–201, 234–254, 266–286, and 294–314; these read AALRDCAATLLITAGAYSLV, IVHVLSGVLFMSSWPLFSNST, FFAAIVPLLNCIRLLTYGLRL, YVIVLLVSVLVFWRQSPIGIV, IGSISMFISGFLLSALMLFYF, LALGKLALVALAATVVECIPV, and ISVPLATMLAAYLLFGYSSCC.

Belongs to the polyprenol kinase family.

The protein resides in the plastid. It is found in the chloroplast membrane. It carries out the reaction phytol + CTP = phytyl phosphate + CDP + H(+). It participates in cofactor biosynthesis; tocopherol biosynthesis. In terms of biological role, involved in the activation and reutilization of phytol from chlorophyll degradation in plant metabolism, including tocopherol biosynthesis. Catalyzes the conversion of phytol to phytol monophosphate (PMP). This is Probable phytol kinase 1, chloroplastic from Oryza sativa subsp. japonica (Rice).